The sequence spans 372 residues: UDP-N-acetylglucosamine--N-acetylmuramyl-(pentapeptide) pyrophosphoryl-undecaprenol N-acetylglucosamine transferase (372 aa).

Residues 21-23 (TAG), Asn-135, Arg-172, Ser-206, and Gln-303 each bind UDP-N-acetyl-alpha-D-glucosamine.

This sequence belongs to the glycosyltransferase 28 family. MurG subfamily.

The protein resides in the cell membrane. The catalysed reaction is di-trans,octa-cis-undecaprenyl diphospho-N-acetyl-alpha-D-muramoyl-L-alanyl-D-glutamyl-meso-2,6-diaminopimeloyl-D-alanyl-D-alanine + UDP-N-acetyl-alpha-D-glucosamine = di-trans,octa-cis-undecaprenyl diphospho-[N-acetyl-alpha-D-glucosaminyl-(1-&gt;4)]-N-acetyl-alpha-D-muramoyl-L-alanyl-D-glutamyl-meso-2,6-diaminopimeloyl-D-alanyl-D-alanine + UDP + H(+). Its pathway is cell wall biogenesis; peptidoglycan biosynthesis. Its function is as follows. Cell wall formation. Catalyzes the transfer of a GlcNAc subunit on undecaprenyl-pyrophosphoryl-MurNAc-pentapeptide (lipid intermediate I) to form undecaprenyl-pyrophosphoryl-MurNAc-(pentapeptide)GlcNAc (lipid intermediate II). This Paenarthrobacter aurescens (strain TC1) protein is UDP-N-acetylglucosamine--N-acetylmuramyl-(pentapeptide) pyrophosphoryl-undecaprenol N-acetylglucosamine transferase.